The chain runs to 313 residues: Aspartate carbamoyltransferase catalytic subunit (313 aa).

Residues Arg51 and Thr52 each contribute to the carbamoyl phosphate site. Residue Lys80 coordinates L-aspartate. Carbamoyl phosphate is bound by residues Arg101, His129, and Gln132. Arg162 and Arg224 together coordinate L-aspartate. Carbamoyl phosphate is bound by residues Leu263 and Pro264.

It belongs to the aspartate/ornithine carbamoyltransferase superfamily. ATCase family. In terms of assembly, heterododecamer (2C3:3R2) of six catalytic PyrB chains organized as two trimers (C3), and six regulatory PyrI chains organized as three dimers (R2).

It catalyses the reaction carbamoyl phosphate + L-aspartate = N-carbamoyl-L-aspartate + phosphate + H(+). Its pathway is pyrimidine metabolism; UMP biosynthesis via de novo pathway; (S)-dihydroorotate from bicarbonate: step 2/3. Functionally, catalyzes the condensation of carbamoyl phosphate and aspartate to form carbamoyl aspartate and inorganic phosphate, the committed step in the de novo pyrimidine nucleotide biosynthesis pathway. This is Aspartate carbamoyltransferase catalytic subunit from Phocaeicola vulgatus (strain ATCC 8482 / DSM 1447 / JCM 5826 / CCUG 4940 / NBRC 14291 / NCTC 11154) (Bacteroides vulgatus).